The sequence spans 342 residues: Holliday junction branch migration complex subunit RuvB (342 aa).

The interval 1-179 is large ATPase domain (RuvB-L); it reads MTNILSPEKS…FGIPMRLNFY (179 aa). ATP-binding positions include Ile-18, Arg-19, Gly-60, Lys-63, Thr-64, Thr-65, 126-128, Arg-169, Tyr-179, and Arg-216; that span reads EDF. Residue Thr-64 coordinates Mg(2+). The segment at 180-250 is small ATPAse domain (RuvB-S); sequence NTEELKKVLN…ISDFGLNRLE (71 aa). Positions 253-342 are head domain (RuvB-H); the sequence is CIGLDSNDYR…HQFNIFNENE (90 aa). Residues Arg-289, Arg-308, and Arg-313 each contribute to the DNA site.

This sequence belongs to the RuvB family. As to quaternary structure, homohexamer. Forms an RuvA(8)-RuvB(12)-Holliday junction (HJ) complex. HJ DNA is sandwiched between 2 RuvA tetramers; dsDNA enters through RuvA and exits via RuvB. An RuvB hexamer assembles on each DNA strand where it exits the tetramer. Each RuvB hexamer is contacted by two RuvA subunits (via domain III) on 2 adjacent RuvB subunits; this complex drives branch migration. In the full resolvosome a probable DNA-RuvA(4)-RuvB(12)-RuvC(2) complex forms which resolves the HJ.

The protein localises to the cytoplasm. The enzyme catalyses ATP + H2O = ADP + phosphate + H(+). Functionally, the RuvA-RuvB-RuvC complex processes Holliday junction (HJ) DNA during genetic recombination and DNA repair, while the RuvA-RuvB complex plays an important role in the rescue of blocked DNA replication forks via replication fork reversal (RFR). RuvA specifically binds to HJ cruciform DNA, conferring on it an open structure. The RuvB hexamer acts as an ATP-dependent pump, pulling dsDNA into and through the RuvAB complex. RuvB forms 2 homohexamers on either side of HJ DNA bound by 1 or 2 RuvA tetramers; 4 subunits per hexamer contact DNA at a time. Coordinated motions by a converter formed by DNA-disengaged RuvB subunits stimulates ATP hydrolysis and nucleotide exchange. Immobilization of the converter enables RuvB to convert the ATP-contained energy into a lever motion, pulling 2 nucleotides of DNA out of the RuvA tetramer per ATP hydrolyzed, thus driving DNA branch migration. The RuvB motors rotate together with the DNA substrate, which together with the progressing nucleotide cycle form the mechanistic basis for DNA recombination by continuous HJ branch migration. Branch migration allows RuvC to scan DNA until it finds its consensus sequence, where it cleaves and resolves cruciform DNA. The polypeptide is Holliday junction branch migration complex subunit RuvB (Rickettsia africae (strain ESF-5)).